A 237-amino-acid chain; its full sequence is MAVERKFVADGVRKVRVERHLGHELKRAGYGGMDLIRTPLGTQVTIFAEKPGIVIGKGGKVVRTLTQDLATTYGVESPQIEVQQVDNPNLNAQIMAERLASALERGWYFRKAGSSTLRRIMDSGALGCEVVISGKLTGARGRVQKFTEGYIKHSGDPVNTLVDKGYAVAIKKLGVIGVQVRLIPPGAQLPDHFEVTAAVTKKQRNMAHITRIPSEYDEEDLDLDAIVNEPDDFMEEE.

The KH type-2 domain maps to 17–86; that stretch reads VERHLGHELK…SPQIEVQQVD (70 aa).

It belongs to the universal ribosomal protein uS3 family. Part of the 30S ribosomal subunit.

In terms of biological role, binds the lower part of the 30S subunit head. The polypeptide is Small ribosomal subunit protein uS3 (Methanospirillum hungatei JF-1 (strain ATCC 27890 / DSM 864 / NBRC 100397 / JF-1)).